We begin with the raw amino-acid sequence, 215 residues long: Cytochrome b6 (215 aa).

A helical membrane pass occupies residues 32-52; sequence IFYCLGGITLTCFLIQFATGF. Position 35 (Cys35) interacts with heme c. Heme b-binding residues include His86 and His100. Transmembrane regions (helical) follow at residues 90 to 110, 116 to 136, and 186 to 206; these read ASMM…TGGF, LTWV…VTGY, and LHTF…FLMI. Positions 187 and 202 each coordinate heme b.

The protein belongs to the cytochrome b family. PetB subfamily. The 4 large subunits of the cytochrome b6-f complex are cytochrome b6, subunit IV (17 kDa polypeptide, PetD), cytochrome f and the Rieske protein, while the 4 small subunits are PetG, PetL, PetM and PetN. The complex functions as a dimer. Heme b is required as a cofactor. Requires heme c as cofactor.

The protein resides in the cellular thylakoid membrane. Component of the cytochrome b6-f complex, which mediates electron transfer between photosystem II (PSII) and photosystem I (PSI), cyclic electron flow around PSI, and state transitions. This Synechococcus elongatus (strain ATCC 33912 / PCC 7942 / FACHB-805) (Anacystis nidulans R2) protein is Cytochrome b6.